A 255-amino-acid chain; its full sequence is MTSILVSSFLLATLVLQYATIDAVDYCRLPCRGDNYHVGCREPAYAQECGQSPRTRELLKEHRNEILSKINDVRDHVAKGSWGLPVAARMKVVVWDAELAGLAKRHTKGCVGETLECRNTERLFSPGYLNFKYSGDKLPRIMELIDAAVKKGHLQKHNITREIIESYRDNGPDGNVKELALAISDRVTAVGCGLTTWQDGAKARALLTCNFSSQNIWGRPVYKVGNSPGEKCIEKDETYTNLCSATEPIDPNKSN.

A signal peptide spans 1–23 (MTSILVSSFLLATLVLQYATIDA). A Cell attachment site motif is present at residues 32 to 34 (RGD). Residues 67 to 211 (LSKINDVRDH…KARALLTCNF (145 aa)) enclose the SCP domain.

It belongs to the CRISP family. As to expression, expressed in salivary glands.

The protein resides in the secreted. Its function is as follows. Inhibits platelet aggregation induced by all agonists tested (ADP, arachidonic acid, the thromboxane A2 analog U46619, thrombin, and snake venom snaclecs (TMVA that activates platelet through GPIB, and stejnulxin that specifically acts through GPVI (GP6))). May act by competing with fibrinogen for binding to glycoprotein IIb/IIIa (ITGA2B/ITGB3). This Tabanus yao (Horsefly) protein is Tabinhibitin 7.